A 92-amino-acid polypeptide reads, in one-letter code: Large ribosomal subunit protein bL34m (92 aa).

The transit peptide at 1 to 46 directs the protein to the mitochondrion; the sequence is MAVLAGSLLGPTSRSAALLGGRWLQPRAWLGFPDAWGLPTPQQARG. At serine 71 the chain carries Phosphoserine.

This sequence belongs to the bacterial ribosomal protein bL34 family. As to quaternary structure, component of the mitochondrial large ribosomal subunit (mt-LSU). Mature mammalian 55S mitochondrial ribosomes consist of a small (28S) and a large (39S) subunit. The 28S small subunit contains a 12S ribosomal RNA (12S mt-rRNA) and 30 different proteins. The 39S large subunit contains a 16S rRNA (16S mt-rRNA), a copy of mitochondrial valine transfer RNA (mt-tRNA(Val)), which plays an integral structural role, and 52 different proteins.

Its subcellular location is the mitochondrion. This Homo sapiens (Human) protein is Large ribosomal subunit protein bL34m (MRPL34).